Reading from the N-terminus, the 310-residue chain is ADP-L-glycero-D-manno-heptose-6-epimerase (310 aa).

Residues 10–11, 31–32, K38, K53, 75–79, and N92 contribute to the NADP(+) site; these read FI, DN, and EGACS. Y140 serves as the catalytic Proton acceptor. K144 is a binding site for NADP(+). N169 is a binding site for substrate. Positions 170 and 178 each coordinate NADP(+). K178 (proton acceptor) is an active-site residue. Residues S180, H187, 201–204, R209, and Y272 each bind substrate; that span reads FAGS.

The protein belongs to the NAD(P)-dependent epimerase/dehydratase family. HldD subfamily. As to quaternary structure, homopentamer. Requires NADP(+) as cofactor.

It carries out the reaction ADP-D-glycero-beta-D-manno-heptose = ADP-L-glycero-beta-D-manno-heptose. Its pathway is nucleotide-sugar biosynthesis; ADP-L-glycero-beta-D-manno-heptose biosynthesis; ADP-L-glycero-beta-D-manno-heptose from D-glycero-beta-D-manno-heptose 7-phosphate: step 4/4. Catalyzes the interconversion between ADP-D-glycero-beta-D-manno-heptose and ADP-L-glycero-beta-D-manno-heptose via an epimerization at carbon 6 of the heptose. The protein is ADP-L-glycero-D-manno-heptose-6-epimerase of Yersinia pseudotuberculosis serotype O:1b (strain IP 31758).